Consider the following 611-residue polypeptide: Protein KINASE OF THE OUTER CHLOROPLAST MEMBRANE 1 (611 aa).

At 1–555 the chain is on the cytoplasmic side; the sequence is MASKIIAGKP…LEDFHWAVRP (555 aa). The Protein kinase domain occupies 39–306; that stretch reads LKLRHRIGRG…TDILLVLKSL (268 aa). ATP contacts are provided by residues 45–53 and Lys74; that span reads IGRGPFGDV. The helical transmembrane segment at 556 to 572 threads the bilayer; the sequence is LLIAMGLLTAMKLGICV. At 573–611 the chain is on the chloroplast intermembrane side; the sequence is RKKIGRSKDGKQRDGSTGQGDCKIPDGKGSDKSKWLVFF. The segment at 579-606 is disordered; sequence SKDGKQRDGSTGQGDCKIPDGKGSDKSK. A compositionally biased stretch (basic and acidic residues) spans 595–606; sequence KIPDGKGSDKSK.

The protein belongs to the protein kinase superfamily. Ser/Thr protein kinase family. Associates with the TOC complex containing, at least, translocons at the chloroplast envelope (e.g. TOCs and TICs such as TOC159, TOC75, TOC33 and TIC56).

It is found in the plastid. The protein localises to the chloroplast outer membrane. It carries out the reaction L-seryl-[protein] + ATP = O-phospho-L-seryl-[protein] + ADP + H(+). The enzyme catalyses L-threonyl-[protein] + ATP = O-phospho-L-threonyl-[protein] + ADP + H(+). In terms of biological role, serine/threonine protein kinase acting as a regulatory component of the plastid protein import machinery by phosphorylating import receptors (e.g. the A-domain of TOC159, TOC120 and TOC132). Supports preprotein import and contributes to efficient chloroplast biogenesis, thus being required for survival during de-etiolation. This chain is Protein KINASE OF THE OUTER CHLOROPLAST MEMBRANE 1, found in Arabidopsis thaliana (Mouse-ear cress).